Consider the following 180-residue polypeptide: Pro-glucagon (180 aa).

A signal peptide spans 1-20; sequence MKSIYFVAGLFVMLVQGSWQ. The interval 26–56 is disordered; it reads TEEKSRSFSAPQTEPLNDLDQMNEDKRHSQG. Serine 54 carries the post-translational modification Phosphoserine. Residues 84 to 89 constitute a propeptide that is removed on maturation; sequence NKNNIA. 2 positions are modified to phosphoserine: serine 105 and serine 108. Arginine amide is present on arginine 127. A propeptide spanning residues 131–145 is cleaved from the precursor; it reads DFPEEVAIVEEFRRR. Serine 150 and serine 152 each carry phosphoserine.

Belongs to the glucagon family. Proglucagon is post-translationally processed in a tissue-specific manner in pancreatic A cells and intestinal L cells. In pancreatic A cells, the major bioactive hormone is glucagon cleaved by PCSK2/PC2. In the intestinal L cells PCSK1/PC1 liberates GLP-1, GLP-2, glicentin and oxyntomodulin. GLP-1 is further N-terminally truncated by post-translational processing in the intestinal L cells resulting in GLP-1(7-37) GLP-1-(7-36)amide. The C-terminal amidation is neither important for the metabolism of GLP-1 nor for its effects on the endocrine pancreas. In terms of tissue distribution, glucagon is secreted in the A cells of the islets of Langerhans. GLP-1, GLP-2, oxyntomodulin and glicentin are secreted from enteroendocrine cells throughout the gastrointestinal tract. GLP-1 and GLP-2 are also secreted in selected neurons in the brain.

The protein localises to the secreted. Functionally, plays a key role in glucose metabolism and homeostasis. Regulates blood glucose by increasing gluconeogenesis and decreasing glycolysis. A counterregulatory hormone of insulin, raises plasma glucose levels in response to insulin-induced hypoglycemia. Plays an important role in initiating and maintaining hyperglycemic conditions in diabetes. Its function is as follows. Potent stimulator of glucose-dependent insulin release. Also stimulates insulin release in response to IL6. Plays important roles on gastric motility and the suppression of plasma glucagon levels. May be involved in the suppression of satiety and stimulation of glucose disposal in peripheral tissues, independent of the actions of insulin. Has growth-promoting activities on intestinal epithelium. May also regulate the hypothalamic pituitary axis (HPA) via effects on LH, TSH, CRH, oxytocin, and vasopressin secretion. Increases islet mass through stimulation of islet neogenesis and pancreatic beta cell proliferation. Inhibits beta cell apoptosis. Stimulates intestinal growth and up-regulates villus height in the small intestine, concomitant with increased crypt cell proliferation and decreased enterocyte apoptosis. The gastrointestinal tract, from the stomach to the colon is the principal target for GLP-2 action. Plays a key role in nutrient homeostasis, enhancing nutrient assimilation through enhanced gastrointestinal function, as well as increasing nutrient disposal. Stimulates intestinal glucose transport and decreases mucosal permeability. In terms of biological role, significantly reduces food intake. Inhibits gastric emptying in humans. Suppression of gastric emptying may lead to increased gastric distension, which may contribute to satiety by causing a sensation of fullness. Functionally, may modulate gastric acid secretion and the gastro-pyloro-duodenal activity. May play an important role in intestinal mucosal growth in the early period of life. The protein is Pro-glucagon (GCG) of Canis lupus familiaris (Dog).